The sequence spans 276 residues: Dermonecrotic toxin LsaSicTox-alphaIB2i (276 aa).

The active site involves His-5. Mg(2+) contacts are provided by Glu-25 and Asp-27. The active-site Nucleophile is His-41. 2 disulfide bridges follow: Cys-45–Cys-51 and Cys-47–Cys-190. Asp-85 serves as a coordination point for Mg(2+). 2 N-linked (GlcNAc...) asparagine glycosylation sites follow: Asn-129 and Asn-253.

The protein belongs to the arthropod phospholipase D family. Class II subfamily. The cofactor is Mg(2+). Expressed by the venom gland.

It localises to the secreted. It carries out the reaction an N-(acyl)-sphingosylphosphocholine = an N-(acyl)-sphingosyl-1,3-cyclic phosphate + choline. It catalyses the reaction an N-(acyl)-sphingosylphosphoethanolamine = an N-(acyl)-sphingosyl-1,3-cyclic phosphate + ethanolamine. The catalysed reaction is a 1-acyl-sn-glycero-3-phosphocholine = a 1-acyl-sn-glycero-2,3-cyclic phosphate + choline. The enzyme catalyses a 1-acyl-sn-glycero-3-phosphoethanolamine = a 1-acyl-sn-glycero-2,3-cyclic phosphate + ethanolamine. Dermonecrotic toxins cleave the phosphodiester linkage between the phosphate and headgroup of certain phospholipids (sphingolipid and lysolipid substrates), forming an alcohol (often choline) and a cyclic phosphate. This toxin acts on sphingomyelin (SM). It may also act on ceramide phosphoethanolamine (CPE), lysophosphatidylcholine (LPC) and lysophosphatidylethanolamine (LPE), but not on lysophosphatidylserine (LPS), and lysophosphatidylglycerol (LPG). It acts by transphosphatidylation, releasing exclusively cyclic phosphate products as second products. Induces dermonecrosis, hemolysis, increased vascular permeability, edema, inflammatory response, and platelet aggregation. The protein is Dermonecrotic toxin LsaSicTox-alphaIB2i of Loxosceles sabina (Tucson recluse spider).